The sequence spans 252 residues: Imidazole glycerol phosphate synthase subunit HisF (252 aa).

Catalysis depends on residues aspartate 11 and aspartate 130.

This sequence belongs to the HisA/HisF family. Heterodimer of HisH and HisF.

It localises to the cytoplasm. It catalyses the reaction 5-[(5-phospho-1-deoxy-D-ribulos-1-ylimino)methylamino]-1-(5-phospho-beta-D-ribosyl)imidazole-4-carboxamide + L-glutamine = D-erythro-1-(imidazol-4-yl)glycerol 3-phosphate + 5-amino-1-(5-phospho-beta-D-ribosyl)imidazole-4-carboxamide + L-glutamate + H(+). Its pathway is amino-acid biosynthesis; L-histidine biosynthesis; L-histidine from 5-phospho-alpha-D-ribose 1-diphosphate: step 5/9. IGPS catalyzes the conversion of PRFAR and glutamine to IGP, AICAR and glutamate. The HisF subunit catalyzes the cyclization activity that produces IGP and AICAR from PRFAR using the ammonia provided by the HisH subunit. The chain is Imidazole glycerol phosphate synthase subunit HisF from Bacillus pumilus (strain SAFR-032).